We begin with the raw amino-acid sequence, 128 residues long: Insulin-like 3 (128 aa).

Residues 1–15 (MHALLLLLLLALGSA) form the signal peptide. Disulfide bonds link cysteine 29/cysteine 113, cysteine 41/cysteine 126, and cysteine 112/cysteine 117. Over residues 81 to 94 (ALDPDPALDPQLPH) the composition is skewed to low complexity. Residues 81–101 (ALDPDPALDPQLPHQASQRQR) are disordered.

The protein belongs to the insulin family. In terms of assembly, heterodimer of a B chain and an A chain linked by two disulfide bonds. Expressed in Leydig cells of the testis, and weakly in the theca interna cells of antral follicles and the corpus luteum of the ovary.

The protein localises to the secreted. Its function is as follows. Seems to play a role in testicular function. May be a trophic hormone with a role in testicular descent in fetal life. Is a ligand for LGR8 receptor. This chain is Insulin-like 3 (Insl3), found in Rattus norvegicus (Rat).